A 258-amino-acid chain; its full sequence is Ubiquinone/menaquinone biosynthesis C-methyltransferase UbiE (258 aa).

Positions 1 to 21 (MPESRTSADGGMETSYGFREV) are disordered. Residues T81, D102, and 130–131 (NA) each bind S-adenosyl-L-methionine.

The protein belongs to the class I-like SAM-binding methyltransferase superfamily. MenG/UbiE family.

It carries out the reaction a 2-demethylmenaquinol + S-adenosyl-L-methionine = a menaquinol + S-adenosyl-L-homocysteine + H(+). The enzyme catalyses a 2-methoxy-6-(all-trans-polyprenyl)benzene-1,4-diol + S-adenosyl-L-methionine = a 5-methoxy-2-methyl-3-(all-trans-polyprenyl)benzene-1,4-diol + S-adenosyl-L-homocysteine + H(+). The protein operates within quinol/quinone metabolism; menaquinone biosynthesis; menaquinol from 1,4-dihydroxy-2-naphthoate: step 2/2. It participates in cofactor biosynthesis; ubiquinone biosynthesis. In terms of biological role, methyltransferase required for the conversion of demethylmenaquinol (DMKH2) to menaquinol (MKH2) and the conversion of 2-polyprenyl-6-methoxy-1,4-benzoquinol (DDMQH2) to 2-polyprenyl-3-methyl-6-methoxy-1,4-benzoquinol (DMQH2). The chain is Ubiquinone/menaquinone biosynthesis C-methyltransferase UbiE from Rhizobium leguminosarum bv. trifolii (strain WSM2304).